The primary structure comprises 3165 residues: MTDKSIVILSLMVFHSSFINGKTCRRQLVEEWHPQPSSYVVNWTLTENICLDFYRDCWFLGVNTKIDTSGNQAVPQICPLQIQLGDILVISSEPSLQFPEINLMNVSETSFVGCVQNTTTEDQLLFGCRLKGMHTVNSKWLSVGTHYFITVMASGPSPCPLGLRLNVTVKQQFCQESLSSEFCSGHGKCLSEAWSKTYSCHCQPPFSGKYCQELDACSFKPCKNNGSCINKRENWDEQAYECVCHPPFTGKNCSEIIGQCQPHVCFHGNCSNITSNSFICECDEQFSGPFCEVSAKPCVSLLFWKRGICPNSSSAYTYECPKGSSSQNGETDVSEFSLVPCQNGTDCIKISNDVMCICSPIFTDLLCKSIQTSCESFPLRNNATCKKCEKDYPCSCISGFTEKNCEKAIDHCKLLSINCLNEEWCFNIIGRFKYVCIPGCTKNPCWFLKNVYLIHQHLCYCGVTFHGICQDKGPAQFEYVWQLGFAGSEGEKCQGVIDAYFFLAANCTEDATYVNDPEDNNSSCWFPHEGTKEICANGCSCLSEEDSQEYRYLCFLRWAGNMYLENTTDDQENECQHEAVCKDEINRPRCSCSLSYIGRLCVVNVDYCLGNHSISVHGLCLALSHNCNCSGLQRYERNICEIDTEDCKSASCKNGTTSTHLRGYFFRKCVPGFKGTQCEIDIDECASHPCKNGATCIDQPGNYFCQCVPPFKVVDGFSCLCNPGYVGIRCEQDIDDCILNACEHNSTCKDLHLSYQCVCLSDWEGNFCEQESNECKMNPCKNNSTCTDLYKSYRCECTSGWTGQNCSEEINECDSDPCMNGGLCHESTIPGQFVCLCPPLYTGQFCHQRYNLCDLLHNPCRNNSTCLALVDANQHCICREEFEGKNCEIDVKDCLFLSCQDYGDCEDMVNNFRCICRPGFSGSLCEIEINECSSEPCKNNGTCVDLTNRFFCNCEPEYHGPFCELDVNKCKISPCLDEENCVYRTDGYNCLCAPGYTGINCEINLDECLSEPCLHDGVCIDGINHYTCDCKSGFFGTHCETNANDCLSNPCLHGRCTELINEYPCSCDADGTSTQCKIKINDCTSIPCMNEGFCQKSAHGFTCICPRGYTGAYCEKSIDNCAEPELNSVICLNGGICVDGPGHTFDCRCLPGFSGQFCEININECSSSPCLHGADCEDHINGYVCKCQPGWSGHHCENELECIPNSCVHELCMENEPGSTCLCTPGFMTCSIGLLCGDEIRRITCLTPIFQRTDPISTQTYTIPPSETLVSSFPSIKATRIPAIMDTYPVDQGPKQTGIVKHDILPTTGLATLRISTPLESYLLQELIVTRELSAKHSLLSSADVSSSRFLNFGIRDPAQIVQDKTSVSHMPIRTSAATLGFFFPDRRARTPFIMSSLMSDFIFPTQSLLFENCQTVALSATPTTSVIRSIPGADIELNRQSLLSRGFLLIAASISATPVVSRGAQEDIEEYSADSLISRREHWRLLSPSMSPIFPAKVIISKQVTILNSSALHRFSTKAFNPSEYQAITEASSNQRLTNIKSQAADSLRELSQTCATCSMTEIKSSREFSDQVLHSKQSHFYETFWMNSAILASWYALMGAQTITSGHSFSSATEITPSVAFTEVPSLFPSKKSAKRTILSSSLEESITLSSNLDVNLCLDKTCLSIVPSQTISSDLMNSDLTSKMTTDELSVSENILKLLKIRQYGITMGPTEVLNQESLLDMEKSKGSHTLFKLHPSDSSLDFELNLQIYPDVTLKTYSEITHANDFKNNLPPLTGSVPDFSEVTTNVAFYTVSATPALSIQTSSSMSVIRPDWPYFTDYMTSLKKEVKTSSEWSKWELQPSVQYQEFPTASRHLPFTRSLTLSSLESILAPQRLMISDFSCVRYYGDSYLEFQNVALNPQNNISLEFQTFSSYGLLLYVKQDSNLVDGFFIQLFIENGTLKYHFYCPGEAKFKSINTTVRVDNGQKYTLLIRQELDPCNAELTILGRNTQICESINHVLGKPLPKSGSVFIGGFPDLHGKIQMPVPVKNFTGCIEVIEINNWRSFIPSKAVKNYHINNCRSQGFMLSPTASFVDASDVTQGVDTMWTSVSPSVAAPSVCQQDVCHNGGTCHAIFLSSGIVSFQCDCPLHFTGRFCEKDAGLFFPSFNGNSYLELPFLKFVLEKEHNRTVTIYLTIKTNSLNGTILYSNGNNCGKQFLHLFLVEGRPSVKYGCGNSQNILTVSANYSINTNAFTPITIRYTTPVGSPGVVCMIEMTADGKPPVQKKDTEISHASQAYFESMFLGHIPANVQIHKKAGPVYGFRGCILDLQVNNKEFFIIDEARHGKNIENCHVPWCAHHLCRNNGTCISDNENLFCECPRLYSGKLCQFASCENNPCGNGATCVPKSGTDIVCLCPYGRSGPLCTDAINITQPRFSGTDAFGYTSFLAYSRISDISFHYEFHLKFQLANNHSALQNNLIFFTGQKGHGLNGDDFLAVGLLNGSVVYSYNLGSGIASIRSEPLNLSLGVHTVHLGKFFQEGWLKVDDHKNKSIIAPGRLVGLNVFSQFYVGGYSEYTPDLLPNGADFKNGFQGCIFTLQVRTEKDGHFRGLGNPEGHPNAGRSVGQCHASPCSLMKCGNGGTCIESGTSVYCNCTTGWKGSFCTETVSTCDPEHDPPHHCSRGATCISLPHGYTCFCPLGTTGIYCEQALILIVILEKPKPAERKVKKEALSISDPSFRSNELSWMSFASFHVRKKTHIQLQFQPLAADGILFYAAQHLKAQSGDFLCISLVNSSVQLRYNLGDRTIILETLQKVTINGSTWHIIKAGRVGAEGYLDLDGINVTEKASTKMSSLDTNTDFYIGGVSSLNLVNPMAIENEPVGFQGCIRQVIINNQELQLTEFGAKGGSNVGDCDGTACGYNTCRNGGECTVNGTTFSCRCLPDWAGNTCNQSVSCLNNLCLHQSLCIPDQSFSYSCLCTLGWVGRYCENKTSFSTAKFMGNSYIKYIDPNYRMRNLQFTTISLNFSTTKTEGLIVWMGIAQNEENDFLAIGLHNQTLKIAVNLGERISVPMSYNNGTFCCNKWHHVVVIQNQTLIKAYINNSLILSEDIDPHKNFVALNYDGICYLGGFEYGRKVNIVTQEIFKTNFVGKIKDVVFFQEPKNIELIKLEGYNVYDGDEQNEVT.

The N-terminal stretch at 1 to 21 (MTDKSIVILSLMVFHSSFING) is a signal peptide. N-linked (GlcNAc...) asparagine glycosylation is present at asparagine 166. EGF-like domains follow at residues 170–212 (KQQF…KYCQ), 213–254 (ELDA…KNCS), and 256–292 (IIGQ…PFCE). Intrachain disulfides connect cysteine 174–cysteine 189, cysteine 183–cysteine 200, cysteine 202–cysteine 211, cysteine 217–cysteine 228, cysteine 222–cysteine 242, cysteine 244–cysteine 253, cysteine 260–cysteine 270, cysteine 265–cysteine 280, and cysteine 282–cysteine 291. N-linked (GlcNAc...) asparagine glycans are attached at residues asparagine 269 and asparagine 272. N-linked (GlcNAc...) asparagine glycans are attached at residues asparagine 311 and asparagine 343. EGF-like domains lie at 332–368 (DVSE…LLCK) and 370–406 (IQTS…KNCE). 4 disulfide bridges follow: cysteine 341–cysteine 356, cysteine 358–cysteine 367, cysteine 374–cysteine 385, and cysteine 396–cysteine 405. N-linked (GlcNAc...) asparagine glycans are attached at residues asparagine 506 and asparagine 566. 2 EGF-like domains span residues 567–602 (TTDD…RLCV) and 643–679 (DTED…TQCE). Intrachain disulfides connect cysteine 575–cysteine 590, cysteine 592–cysteine 601, cysteine 669–cysteine 678, cysteine 685–cysteine 696, cysteine 690–cysteine 705, cysteine 707–cysteine 719, cysteine 737–cysteine 748, cysteine 742–cysteine 757, cysteine 759–cysteine 768, cysteine 775–cysteine 786, cysteine 780–cysteine 795, cysteine 797–cysteine 806, cysteine 813–cysteine 824, cysteine 818–cysteine 835, cysteine 837–cysteine 846, cysteine 853–cysteine 866, cysteine 860–cysteine 876, cysteine 878–cysteine 887, cysteine 894–cysteine 905, cysteine 899–cysteine 914, cysteine 916–cysteine 925, cysteine 932–cysteine 943, cysteine 937–cysteine 952, cysteine 954–cysteine 963, cysteine 970–cysteine 981, cysteine 975–cysteine 990, cysteine 992–cysteine 1001, cysteine 1008–cysteine 1019, cysteine 1013–cysteine 1028, cysteine 1030–cysteine 1039, cysteine 1046–cysteine 1056, cysteine 1051–cysteine 1065, cysteine 1067–cysteine 1076, cysteine 1083–cysteine 1094, cysteine 1088–cysteine 1103, cysteine 1105–cysteine 1114, cysteine 1121–cysteine 1137, cysteine 1131–cysteine 1147, cysteine 1149–cysteine 1158, cysteine 1165–cysteine 1176, cysteine 1170–cysteine 1185, cysteine 1187–cysteine 1196, cysteine 2037–cysteine 2063, cysteine 2103–cysteine 2114, cysteine 2108–cysteine 2128, and cysteine 2130–cysteine 2139. Residues 681-720 (DIDECASHPCKNGATCIDQPGNYFCQCVPPFKVVDGFSCL) enclose the EGF-like 8; calcium-binding domain. Positions 733–769 (DIDDCILNACEHNSTCKDLHLSYQCVCLSDWEGNFCE) constitute an EGF-like 9; calcium-binding domain. Positions 771-807 (ESNECKMNPCKNNSTCTDLYKSYRCECTSGWTGQNCS) constitute an EGF-like 10; calcium-binding domain. 3 EGF-like domains span residues 809-847 (EINE…QFCH), 849-888 (RYNL…KNCE), and 890-926 (DVKD…SLCE). In terms of domain architecture, EGF-like 14; calcium-binding spans 928–964 (EINECSSEPCKNNGTCVDLTNRFFCNCEPEYHGPFCE). The 37-residue stretch at 966-1002 (DVNKCKISPCLDEENCVYRTDGYNCLCAPGYTGINCE) folds into the EGF-like 15 domain. Positions 1004–1040 (NLDECLSEPCLHDGVCIDGINHYTCDCKSGFFGTHCE) constitute an EGF-like 16; calcium-binding domain. 3 consecutive EGF-like domains span residues 1042–1077 (NAND…TQCK), 1079–1115 (KIND…AYCE), and 1117–1159 (SIDN…QFCE). The EGF-like 20; calcium-binding domain maps to 1161–1197 (NINECSSSPCLHGADCEDHINGYVCKCQPGWSGHHCE). The 181-residue stretch at 1883 to 2063 (FSCVRYYGDS…AVKNYHINNC (181 aa)) folds into the Laminin G-like 1 domain. The EGF-like 21 domain occupies 2099–2140 (APSVCQQDVCHNGGTCHAIFLSSGIVSFQCDCPLHFTGRFCE). One can recognise a Laminin G-like 2 domain in the interval 2145 to 2339 (LFFPSFNGNS…NIENCHVPWC (195 aa)). Asparagine 2170 carries N-linked (GlcNAc...) asparagine glycosylation. 2 EGF-like domains span residues 2335-2368 (HVPW…YSGK) and 2371-2408 (QFAS…PLCT). Cystine bridges form between cysteine 2339-cysteine 2350, cysteine 2344-cysteine 2359, cysteine 2375-cysteine 2386, cysteine 2380-cysteine 2396, cysteine 2398-cysteine 2407, cysteine 2576-cysteine 2609, cysteine 2614-cysteine 2625, cysteine 2619-cysteine 2634, cysteine 2636-cysteine 2645, cysteine 2652-cysteine 2668, cysteine 2662-cysteine 2677, cysteine 2679-cysteine 2688, cysteine 2868-cysteine 2895, cysteine 2900-cysteine 2911, cysteine 2905-cysteine 2920, cysteine 2922-cysteine 2931, cysteine 2937-cysteine 2948, cysteine 2942-cysteine 2958, and cysteine 2960-cysteine 2969. A Laminin G-like 3 domain is found at 2419-2609 (SGTDAFGYTS…PNAGRSVGQC (191 aa)). EGF-like domains follow at residues 2610-2646 (HASP…SFCT) and 2648-2689 (TVST…IYCE). The 179-residue stretch at 2717–2895 (DPSFRSNELS…AKGGSNVGDC (179 aa)) folds into the Laminin G-like 4 domain. 2 consecutive EGF-like domains span residues 2896 to 2932 (DGTA…NTCN) and 2933 to 2970 (QSVS…RYCE). A Laminin G-like 5 domain is found at 2975–3165 (FSTAKFMGNS…YDGDEQNEVT (191 aa)).

It belongs to the EYS family. In terms of tissue distribution, expressed in retina (at protein level). Isoform 1: Detected in retina. Isoform 2: Detected in retina. Isoform 3: Strongly expressed in retina and testis. Isoform 4: Strongly expressed in testis, and weakly expressed in retina.

Its subcellular location is the cell projection. The protein localises to the cilium. The protein resides in the photoreceptor outer segment. It is found in the cytoplasm. It localises to the cytoskeleton. Its subcellular location is the cilium axoneme. The protein localises to the microtubule organizing center. The protein resides in the centrosome. It is found in the secreted. It localises to the extracellular space. Its subcellular location is the extracellular matrix. The protein localises to the interphotoreceptor matrix. In terms of biological role, required to maintain the integrity of photoreceptor cells. Specifically required for normal morphology of the photoreceptor ciliary pocket, and might thus facilitate protein trafficking between the photoreceptor inner and outer segments via the transition zone. The polypeptide is Protein eyes shut homolog (EYS) (Homo sapiens (Human)).